The primary structure comprises 344 residues: Dihydroorotase (344 aa).

Residues H13 and H15 each contribute to the Zn(2+) site. Substrate-binding positions include H15–R17 and N41. Zn(2+) is bound by residues K98, H135, and H173. K98 is subject to N6-carboxylysine. Position 135 (H135) interacts with substrate. Substrate is bound at residue L218. Position 247 (D247) interacts with Zn(2+). Residue D247 is part of the active site. 2 residues coordinate substrate: H251 and A263.

It belongs to the metallo-dependent hydrolases superfamily. DHOase family. Class II DHOase subfamily. Homodimer. The cofactor is Zn(2+).

The enzyme catalyses (S)-dihydroorotate + H2O = N-carbamoyl-L-aspartate + H(+). It functions in the pathway pyrimidine metabolism; UMP biosynthesis via de novo pathway; (S)-dihydroorotate from bicarbonate: step 3/3. In terms of biological role, catalyzes the reversible cyclization of carbamoyl aspartate to dihydroorotate. The chain is Dihydroorotase from Neisseria meningitidis serogroup C (strain 053442).